The following is a 357-amino-acid chain: Undecaprenyl-phosphate alpha-N-acetylglucosaminyl 1-phosphate transferase (357 aa).

7 helical membrane passes run 40 to 60 (GAIP…FYLL), 64 to 84 (QMRL…IGMI), 124 to 144 (FQLT…IAAI), 183 to 203 (WSFA…GIPF), 209 to 229 (VFMG…ILLL), 238 to 258 (MNPV…IAIM), and 291 to 311 (FLLI…GEIF).

Belongs to the glycosyltransferase 4 family. WecA subfamily. It depends on Mg(2+) as a cofactor. Mn(2+) serves as cofactor.

The protein resides in the cell inner membrane. The enzyme catalyses di-trans,octa-cis-undecaprenyl phosphate + UDP-N-acetyl-alpha-D-glucosamine = N-acetyl-alpha-D-glucosaminyl-di-trans,octa-cis-undecaprenyl diphosphate + UMP. It functions in the pathway bacterial outer membrane biogenesis; LPS O-antigen biosynthesis. Catalyzes the transfer of the GlcNAc-1-phosphate moiety from UDP-GlcNAc onto the carrier lipid undecaprenyl phosphate (C55-P), yielding GlcNAc-pyrophosphoryl-undecaprenyl (GlcNAc-PP-C55). The protein is Undecaprenyl-phosphate alpha-N-acetylglucosaminyl 1-phosphate transferase of Pasteurella multocida (strain Pm70).